Here is a 106-residue protein sequence, read N- to C-terminus: Transcription factor TRY (106 aa).

The 38-residue stretch at 34–71 folds into the Myb-like domain; it reads TEQEEDLIFRMYRLVGDRWDLIAGRVPGRQPEEIERYW. Positions 83–106 are disordered; that stretch reads RRQLHSSSHKHTKPHRPRFSIYPS. Residues 84–100 show a composition bias toward basic residues; it reads RQLHSSSHKHTKPHRPR.

In terms of assembly, interacts with GL3 and thus prevents GL1 GL3 interaction. Also interacts with BHLH2. In terms of tissue distribution, expressed in roots, leaves, siliques and inflorescences.

It is found in the nucleus. Its function is as follows. Transcription factor. Involved in epidermal cell fate specification. Negative regulator of trichome development, including endoreplication, by lateral inhibition involving intercellular interactions. Promotes the formation of hair developing cells (trichoblasts) in H position in root epidermis, probably by inhibiting non-hair cell (atrichoblasts) formation. This chain is Transcription factor TRY (TRY), found in Arabidopsis thaliana (Mouse-ear cress).